Consider the following 529-residue polypeptide: L-ornithine N(5)-monooxygenase (529 aa).

FAD contacts are provided by residues 100–108 (EKQPQFAWH) and Gln119. Lys124 is a binding site for substrate. Residue Val185 participates in FAD binding. 270 to 273 (NGQS) contacts NADP(+). Residues 309–312 (NEIF) and Asn339 each bind substrate. 339-341 (NYG) provides a ligand contact to NADP(+). 493 to 495 (TLL) contributes to the FAD binding site. Ser496 lines the substrate pocket.

This sequence belongs to the lysine N(6)-hydroxylase/L-ornithine N(5)-oxygenase family. In terms of assembly, homotetramer. Requires FAD as cofactor.

It carries out the reaction L-ornithine + NADPH + O2 = N(5)-hydroxy-L-ornithine + NADP(+) + H2O. The enzyme catalyses L-ornithine + NADH + O2 = N(5)-hydroxy-L-ornithine + NAD(+) + H2O. The protein operates within siderophore biosynthesis. Its function is as follows. L-ornithine N(5)-monooxygenase; part of the gene cluster that mediates the biosynthesis of hydroxamate-containing siderophores that play a critical role in virulence. Cochliobolus heterostrophus produces extracellular coprogen-type siderophores including coprogen, neocoprogen I and neocoprogen II, as well as the intracellular siderophore ferricrocin. The role of extracellular siderophores is to supply iron to their producers in planta and the intracellular ferricrocin is required for intracellular iron distribution and storage with a crucial role in ascus and ascospore development. SIDA2 catalyzes the conversion of L-ornithine to N(5)-hydroxyornithine, the first step in the biosynthesis of all hydroxamate-containing siderophores. The assembly of extracellular coprogen-type siderophores is then performed by the nonribosomal peptide synthetase (NRPS) NPS6 whereas the intracellular siderophore ferricrocin is assembled by NPS2. This Cochliobolus heterostrophus (strain C4 / ATCC 48331 / race T) (Southern corn leaf blight fungus) protein is L-ornithine N(5)-monooxygenase.